The sequence spans 61 residues: Metallothionein-2B (61 aa).

Met1 carries the N-acetylmethionine modification. The segment at 1–29 (MDPNCSCAAGGSCTCAGSCKCKDCRCTSC) is beta. A divalent metal cation contacts are provided by Cys5, Cys7, Cys13, Cys15, Cys19, Cys21, Cys24, Cys26, Cys29, Cys33, Cys34, Cys36, Cys37, Cys41, Cys44, Cys48, Cys50, Cys57, Cys59, and Cys60. An alpha region spans residues 30-61 (KKSCCSCCPAGCARCAQGCICKGASDKCSCCA).

The protein belongs to the metallothionein superfamily. Type 1 family. As to quaternary structure, monomer.

Functionally, metallothioneins have a high content of cysteine residues that bind various heavy metals; these proteins are transcriptionally regulated by both heavy metals and glucocorticoids. This chain is Metallothionein-2B (MT2B), found in Sus scrofa (Pig).